The sequence spans 228 residues: MAPKKKLQLPPPPPTDEEEYWDSQAEEVLDEEEEMMEDWDSLDEASEAEEVSDETPSPSVAFPSPAPQKLATVPSIATTSAPQAPPALPVRRPNRRWDTTGTRAAPTAPAAAAAAATAAVTQKQRRPDSKTLTKPKKSTAAAAAGGGALRLAPNEPVSTRELRNRIFPTLYAIFQQSRGQEQELKIKNRSLRSLTRSCLYHKSEDQLRRTLEDAEALFSKYCALTLKD.

The segment at 1 to 156 (MAPKKKLQLP…GALRLAPNEP (156 aa)) is disordered. Residues 15–53 (TDEEEYWDSQAEEVLDEEEEMMEDWDSLDEASEAEEVSD) show a composition bias toward acidic residues. Low complexity-rich tracts occupy residues 54–63 (ETPSPSVAFP) and 104–119 (AAPTAPAAAAAAATAA). Residues 171–198 (YAIFQQSRGQEQELKIKNRSLRSLTRSC) are necessary for nuclear subcellular location. An RS-repeat; required for splicing enhancer activity region spans residues 177 to 197 (SRGQEQELKIKNRSLRSLTRS).

Belongs to the adenoviridae splicing factor family. As to quaternary structure, homooligomer. Interacts with DBP; this interaction occurs at a unique vertex during genome packaging. Interacts with IVa2; this interaction occurs at a unique vertex during genome packaging and seems to potentiate IVa2 and 33K oligomerization. Post-translationally, phosphorylated in vitro by human PKA and PRKDC. PRKDC inhibits, whereas PKA activates the splicing factor.

It is found in the host nucleus. Promotes alternative splicing of late transcripts by promoting splicing at weak 3' splice sites. Required for the temporal activation of major late pre-mRNA splicing at late times of infection. Induces the splicing and expression of the late capsid vertex protein. Its function is as follows. Probably functions as the small terminase that is part of the molecular motor that translocates genomic DNA in empty capsid during DNA packaging. This motor is located at a unique vertex and comprises at least the IVa2 ATPase, the small terminase 33K and probably a portal. Forms a ring-like structure of about 17 nm in which genomic DNA is translocated into the capsid. Stimulates IVa2 ATPase activity in the presence of the viral genome. Once the DNA is packaged, the terminase detaches: the 33K protein is present in the empty particles, but not in the mature virions. Also involved in virion assembly. This Homo sapiens (Human) protein is Protein 33K.